Reading from the N-terminus, the 222-residue chain is MTIVNVIAIDGPTASGKGTVAHKVADAVGFHLLDSGALYRLVALASDRAGIDLADVDALAKIASRLDVKFGPDRVWLQGEEVSLAIRAEAIGNRASAIAVHQPVRDALTQLQRSFRKLPGLVADGRDMGTVIFPDAPLKVFLTASVEARARRRYKQLIDKGISANIEDLLRDLEARDVRDRTRTAAPLRPAEDAKLLDTSDMTVDQAVAQVLEWFAAVRPDA.

Gly11–Thr19 provides a ligand contact to ATP.

This sequence belongs to the cytidylate kinase family. Type 1 subfamily.

The protein resides in the cytoplasm. The enzyme catalyses CMP + ATP = CDP + ADP. It carries out the reaction dCMP + ATP = dCDP + ADP. This is Cytidylate kinase from Cupriavidus necator (strain ATCC 17699 / DSM 428 / KCTC 22496 / NCIMB 10442 / H16 / Stanier 337) (Ralstonia eutropha).